The primary structure comprises 465 residues: Adenosylhomocysteinase (465 aa).

3 residues coordinate substrate: Thr56, Asp131, and Glu191. 192 to 194 (TTT) provides a ligand contact to NAD(+). 2 residues coordinate substrate: Lys221 and Asp225. Residues Asn226, 255-260 (GYGNVG), Glu278, Asn313, 334-336 (IGH), and Asn379 contribute to the NAD(+) site.

Belongs to the adenosylhomocysteinase family. NAD(+) serves as cofactor.

The protein localises to the cytoplasm. It carries out the reaction S-adenosyl-L-homocysteine + H2O = L-homocysteine + adenosine. It participates in amino-acid biosynthesis; L-homocysteine biosynthesis; L-homocysteine from S-adenosyl-L-homocysteine: step 1/1. In terms of biological role, may play a key role in the regulation of the intracellular concentration of adenosylhomocysteine. The sequence is that of Adenosylhomocysteinase from Bartonella quintana (strain Toulouse) (Rochalimaea quintana).